A 369-amino-acid polypeptide reads, in one-letter code: Choline kinase B2 (369 aa).

Belongs to the choline/ethanolamine kinase family. Mg(2+) is required as a cofactor.

It carries out the reaction choline + ATP = phosphocholine + ADP + H(+). It functions in the pathway phospholipid metabolism; phosphatidylcholine biosynthesis; phosphocholine from choline: step 1/1. In terms of biological role, catalyzes the first step in phosphatidylcholine biosynthesis. Phosphorylates choline. In Caenorhabditis elegans, this protein is Choline kinase B2 (ckb-2).